The sequence spans 300 residues: GTPase Era (300 aa).

Positions 6–173 constitute an Era-type G domain; it reads KSGFVAIVGR…MDVLVEQMPE (168 aa). A G1 region spans residues 14-21; it reads GRPNVGKS. Position 14-21 (14-21) interacts with GTP; the sequence is GRPNVGKS. The segment at 40 to 44 is G2; sequence QTTRN. Residues 61-64 form a G3 region; the sequence is DTPG. Residues 61–65 and 123–126 contribute to the GTP site; these read DTPGI and NKID. The G4 stretch occupies residues 123-126; that stretch reads NKID. The segment at 152-154 is G5; the sequence is ISA. The region spanning 204-281 is the KH type-2 domain; that stretch reads TRDEIPHSVA…YLELWVKVQK (78 aa).

This sequence belongs to the TRAFAC class TrmE-Era-EngA-EngB-Septin-like GTPase superfamily. Era GTPase family. Monomer.

The protein resides in the cytoplasm. Its subcellular location is the cell membrane. Functionally, an essential GTPase that binds both GDP and GTP, with rapid nucleotide exchange. Plays a role in 16S rRNA processing and 30S ribosomal subunit biogenesis and possibly also in cell cycle regulation and energy metabolism. In Enterococcus faecalis (strain ATCC 700802 / V583), this protein is GTPase Era.